A 170-amino-acid chain; its full sequence is 3-hydroxydecanoyl-[acyl-carrier-protein] dehydratase (170 aa).

Residue His71 is part of the active site.

Belongs to the thioester dehydratase family. FabA subfamily. In terms of assembly, homodimer.

It localises to the cytoplasm. The catalysed reaction is a (3R)-hydroxyacyl-[ACP] = a (2E)-enoyl-[ACP] + H2O. The enzyme catalyses (3R)-hydroxydecanoyl-[ACP] = (2E)-decenoyl-[ACP] + H2O. It carries out the reaction (2E)-decenoyl-[ACP] = (3Z)-decenoyl-[ACP]. The protein operates within lipid metabolism; fatty acid biosynthesis. Necessary for the introduction of cis unsaturation into fatty acids. Catalyzes the dehydration of (3R)-3-hydroxydecanoyl-ACP to E-(2)-decenoyl-ACP and then its isomerization to Z-(3)-decenoyl-ACP. Can catalyze the dehydratase reaction for beta-hydroxyacyl-ACPs with saturated chain lengths up to 16:0, being most active on intermediate chain length. The polypeptide is 3-hydroxydecanoyl-[acyl-carrier-protein] dehydratase (Chelativorans sp. (strain BNC1)).